Here is a 529-residue protein sequence, read N- to C-terminus: O-acetylstemmadenine oxidase (529 aa).

Residues 1 to 23 (MIKKVPIVLSIFCFLLLLSSSHG) form the signal peptide. A disulfide bridge links cysteine 32 with cysteine 92. Asparagine 52 is a glycosylation site (N-linked (GlcNAc...) asparagine). One can recognise an FAD-binding PCMH-type domain in the interval 70–244 (KSPKPLAIIT…VSWKVKLVKV (175 aa)). Residues 102-108 (IRSGGAD), serine 113, 168-169 (VS), 173-177 (GIGGH), and phenylalanine 183 each bind FAD. A glycan (N-linked (GlcNAc...) asparagine) is linked at asparagine 293. Residue tryptophan 465 participates in FAD binding.

This sequence belongs to the oxygen-dependent FAD-linked oxidoreductase family. FAD is required as a cofactor. As to expression, expressed in leaf epidermis.

Its subcellular location is the endoplasmic reticulum. The protein resides in the vacuole. It localises to the vesicle. The catalysed reaction is O-acetyl-15alpha-stemmadenine + O2 = precondylocarpine acetate + H2O2. Its pathway is alkaloid biosynthesis. Functionally, component of the seco-iridoid and derivatives monoterpenoid indole alkaloids (MIAs, e.g. vinblastine, catharanthine, tabersonine, vincadifformine, vindoline, vincristine, quinine and strychnine) biosynthesis pathway. Converts O-acetylstemmadenine (OAS) to reactive acetylated intermediates, likely dihydroprecondylocarpine acetate. In Catharanthus roseus (Madagascar periwinkle), this protein is O-acetylstemmadenine oxidase.